Here is a 211-residue protein sequence, read N- to C-terminus: Probable transcriptional regulatory protein SgaR (211 aa).

The 117-residue stretch at 10–126 (EVSIVDQNPV…VLLEAVVSVA (117 aa)) folds into the Response regulatory domain. Aspartate 15 carries the 4-aspartylphosphate modification. One can recognise an HTH luxR-type domain in the interval 141–206 (NHDPLESLTA…MAVALHVSIN (66 aa)). A DNA-binding region (H-T-H motif) is located at residues 165–184 (NLQIAARTGISRNTVKYHLK).

Its function is as follows. Not known. Could act on the sgaA gene expression. This is Probable transcriptional regulatory protein SgaR (sgaR) from Hyphomicrobium methylovorum.